Here is a 522-residue protein sequence, read N- to C-terminus: Endochitinase 11 (522 aa).

The N-terminal stretch at 1–24 (MLFSMVMFTERWWVGSKDCPRVPA) is a signal peptide. Asn148 and Asn275 each carry an N-linked (GlcNAc...) asparagine glycan. One can recognise a GH18 domain in the interval 235–522 (KHVYAPYVDF…ALTCLRNSTA (288 aa)). The active-site Proton donor is the Glu346. 2 N-linked (GlcNAc...) asparagine glycosylation sites follow: Asn455 and Asn519.

The protein belongs to the glycosyl hydrolase 18 family. Chitinase class V subfamily.

It localises to the secreted. It carries out the reaction Random endo-hydrolysis of N-acetyl-beta-D-glucosaminide (1-&gt;4)-beta-linkages in chitin and chitodextrins.. In terms of biological role, secreted chitinase involved in the degradation of chitin, a component of the cell walls of fungi and exoskeletal elements of some animals (including worms and arthropods). Participates in the infection process and directly acts in the penetration process of the host cuticle. This chain is Endochitinase 11 (chi11), found in Metarhizium anisopliae (Entomophthora anisopliae).